Reading from the N-terminus, the 362-residue chain is Chorismate synthase (362 aa).

The NADP(+) site is built by R48 and R54. FMN is bound by residues 125-127 (RSS), 237-238 (NA), G277, 292-296 (KPTSS), and R318.

This sequence belongs to the chorismate synthase family. As to quaternary structure, homotetramer. It depends on FMNH2 as a cofactor.

It carries out the reaction 5-O-(1-carboxyvinyl)-3-phosphoshikimate = chorismate + phosphate. It participates in metabolic intermediate biosynthesis; chorismate biosynthesis; chorismate from D-erythrose 4-phosphate and phosphoenolpyruvate: step 7/7. Catalyzes the anti-1,4-elimination of the C-3 phosphate and the C-6 proR hydrogen from 5-enolpyruvylshikimate-3-phosphate (EPSP) to yield chorismate, which is the branch point compound that serves as the starting substrate for the three terminal pathways of aromatic amino acid biosynthesis. This reaction introduces a second double bond into the aromatic ring system. The protein is Chorismate synthase of Idiomarina loihiensis (strain ATCC BAA-735 / DSM 15497 / L2-TR).